A 349-amino-acid polypeptide reads, in one-letter code: Anthranilate phosphoribosyltransferase (349 aa).

Residues Gly84, 87–88 (GD), Thr92, 94–97 (NIST), 112–120 (KHGNRAASS), and Ser124 each bind 5-phospho-alpha-D-ribose 1-diphosphate. An anthranilate-binding site is contributed by Gly84. Ser96 provides a ligand contact to Mg(2+). Asn115 is a binding site for anthranilate. Arg170 serves as a coordination point for anthranilate. Residues Asp228 and Glu229 each contribute to the Mg(2+) site.

It belongs to the anthranilate phosphoribosyltransferase family. In terms of assembly, homodimer. Mg(2+) is required as a cofactor.

It carries out the reaction N-(5-phospho-beta-D-ribosyl)anthranilate + diphosphate = 5-phospho-alpha-D-ribose 1-diphosphate + anthranilate. It participates in amino-acid biosynthesis; L-tryptophan biosynthesis; L-tryptophan from chorismate: step 2/5. Functionally, catalyzes the transfer of the phosphoribosyl group of 5-phosphorylribose-1-pyrophosphate (PRPP) to anthranilate to yield N-(5'-phosphoribosyl)-anthranilate (PRA). The protein is Anthranilate phosphoribosyltransferase of Leifsonia xyli subsp. xyli (strain CTCB07).